The sequence spans 423 residues: tRNA(Ile)-lysidine synthase (423 aa).

29-34 (SGGKDS) lines the ATP pocket.

The protein belongs to the tRNA(Ile)-lysidine synthase family.

It localises to the cytoplasm. The enzyme catalyses cytidine(34) in tRNA(Ile2) + L-lysine + ATP = lysidine(34) in tRNA(Ile2) + AMP + diphosphate + H(+). Its function is as follows. Ligates lysine onto the cytidine present at position 34 of the AUA codon-specific tRNA(Ile) that contains the anticodon CAU, in an ATP-dependent manner. Cytidine is converted to lysidine, thus changing the amino acid specificity of the tRNA from methionine to isoleucine. This is tRNA(Ile)-lysidine synthase from Lactococcus lactis subsp. lactis (strain IL1403) (Streptococcus lactis).